The following is a 72-amino-acid chain: UPF0270 protein ETA_31870 (72 aa).

It belongs to the UPF0270 family.

The chain is UPF0270 protein ETA_31870 from Erwinia tasmaniensis (strain DSM 17950 / CFBP 7177 / CIP 109463 / NCPPB 4357 / Et1/99).